Here is a 70-residue protein sequence, read N- to C-terminus: Putative membrane protein insertion efficiency factor (70 aa).

The protein belongs to the UPF0161 family.

It localises to the cell membrane. Could be involved in insertion of integral membrane proteins into the membrane. In Finegoldia magna (strain ATCC 29328 / DSM 20472 / WAL 2508) (Peptostreptococcus magnus), this protein is Putative membrane protein insertion efficiency factor.